The sequence spans 116 residues: Large ribosomal subunit protein bL17 (116 aa).

Belongs to the bacterial ribosomal protein bL17 family. In terms of assembly, part of the 50S ribosomal subunit. Contacts protein L32.

This is Large ribosomal subunit protein bL17 from Prochlorococcus marinus (strain MIT 9303).